Reading from the N-terminus, the 150-residue chain is SsrA-binding protein (150 aa).

The protein belongs to the SmpB family.

It is found in the cytoplasm. Functionally, required for rescue of stalled ribosomes mediated by trans-translation. Binds to transfer-messenger RNA (tmRNA), required for stable association of tmRNA with ribosomes. tmRNA and SmpB together mimic tRNA shape, replacing the anticodon stem-loop with SmpB. tmRNA is encoded by the ssrA gene; the 2 termini fold to resemble tRNA(Ala) and it encodes a 'tag peptide', a short internal open reading frame. During trans-translation Ala-aminoacylated tmRNA acts like a tRNA, entering the A-site of stalled ribosomes, displacing the stalled mRNA. The ribosome then switches to translate the ORF on the tmRNA; the nascent peptide is terminated with the 'tag peptide' encoded by the tmRNA and targeted for degradation. The ribosome is freed to recommence translation, which seems to be the essential function of trans-translation. The sequence is that of SsrA-binding protein from Campylobacter jejuni subsp. doylei (strain ATCC BAA-1458 / RM4099 / 269.97).